The primary structure comprises 445 residues: Ubiquitin carboxyl-terminal hydrolase MINDY-3 (445 aa).

Residue cysteine 51 is the Nucleophile of the active site. Position 125 is a phosphoserine (serine 125). Histidine 287 (proton acceptor) is an active-site residue.

This sequence belongs to the MINDY deubiquitinase family. FAM188 subfamily. As to quaternary structure, interacts with COPS5. Widely expressed with high levels in heart, skeletal muscle, and kidney, and low levels in liver and brain. Also expressed in lung (at protein level).

It is found in the nucleus. The catalysed reaction is Thiol-dependent hydrolysis of ester, thioester, amide, peptide and isopeptide bonds formed by the C-terminal Gly of ubiquitin (a 76-residue protein attached to proteins as an intracellular targeting signal).. In terms of biological role, hydrolase that can remove 'Lys-48'-linked conjugated ubiquitin from proteins. The sequence is that of Ubiquitin carboxyl-terminal hydrolase MINDY-3 from Homo sapiens (Human).